The sequence spans 849 residues: MANILRKIIENDKGEIKKLEKTAKKVESYADAMAALSDEELQAKTEEFKQRYQNGESLDQLLPEAFAVVREGAKRVLGLFPYRVQIMGGIVLHHGDVAEMRTGEGKTLTATMPVYLNAISGEGVHVITVNEYLSERDATEMGELYSWLGLSVGINLSSKSPAEKREAYNCDITYSTSSEVGFDYLRDNMVVRKENMVQRPLNFALVDEVDSVLIDEARTPLIVSGPVSSETNQLYHRADAFVKTLTEDDYAIDIPTKTIGLNDSGIDKAEEFFNLENLYDIDNVALTHYIDNALRANYIMLRDIDYVVSPEQEILIVDQFTGRTMEGRRFSDGLHQAIEAKEGVPVQEETKTSASITYQNMFRMYKKLSGMTGTGKTEEDEFREIYNMRVIPIPTNRPIQRIDHDDLLYSTLDAKFRAVVQDVKRRYEKGQPVLIGTVAVETSDLISKMLVDAGIPHEVLNAKNHEKEAHIIMNAGQRGAVTIATNMAGRGTDIKLGEGVLELGGLCVIGTERHESRRIDNQLRGRSGRQGDPGESQFYLSLEDELMRRFGSDRIKHVLERLNADDEDIVIKSRMLTRQVESAQKRVEGNNYDTRKQVLQYDDVMREQREIIYAERYDVITAERDLEPEIKAMIKRTINRTVDGHSRNDQEEALKGILNFARQALVPEDAISLEDLKEVGEVTKRSVNYDAIKVYLTELADNVYDRQIKKLRSEEAIREFQKVLILMVVDNKWTDHIDALDQLRNAVGMRGYAQNNPIVEYQSESFKMFQDMIGAIEYDVTRTMMKAQIHEQSREHVNERVSTTATGNIQAHQADANGQEIDFSKVGRNDFCPCGSGKKFKNCHGRKQF.

ATP is bound by residues Q85, 103–107 (GEGKT), and D493. Residues C832, C834, C843, and H844 each coordinate Zn(2+).

It belongs to the SecA family. Monomer and homodimer. Part of the essential Sec protein translocation apparatus which comprises SecA, SecYEG and auxiliary proteins SecDF. Other proteins may also be involved. Zn(2+) serves as cofactor.

It localises to the cell membrane. Its subcellular location is the cytoplasm. It catalyses the reaction ATP + H2O + cellular proteinSide 1 = ADP + phosphate + cellular proteinSide 2.. Its function is as follows. Part of the Sec protein translocase complex. Interacts with the SecYEG preprotein conducting channel. Has a central role in coupling the hydrolysis of ATP to the transfer of proteins into and across the cell membrane, serving as an ATP-driven molecular motor driving the stepwise translocation of polypeptide chains across the membrane. This Streptococcus thermophilus (strain ATCC BAA-250 / LMG 18311) protein is Protein translocase subunit SecA.